Reading from the N-terminus, the 660-residue chain is DNA mismatch repair protein MutL (660 aa).

The protein belongs to the DNA mismatch repair MutL/HexB family.

Its function is as follows. This protein is involved in the repair of mismatches in DNA. It is required for dam-dependent methyl-directed DNA mismatch repair. May act as a 'molecular matchmaker', a protein that promotes the formation of a stable complex between two or more DNA-binding proteins in an ATP-dependent manner without itself being part of a final effector complex. In Streptococcus equi subsp. zooepidemicus (strain H70), this protein is DNA mismatch repair protein MutL.